A 124-amino-acid chain; its full sequence is MTKTKQEIYNKRPTSPHLSIYKLQISSTLSILHRMTGVALFFAVSILAWWLILSKYDNNYLQFANCCIIKICLVAVSYAWFYHLCNGIRHLFWDIGYGFSIKAVNITGWCVVVCSILLTMLLWV.

At 1 to 29 the chain is on the cytoplasmic side; the sequence is MTKTKQEIYNKRPTSPHLSIYKLQISSTL. A helical membrane pass occupies residues 30 to 55; sequence SILHRMTGVALFFAVSILAWWLILSK. Over 56-67 the chain is Periplasmic; the sequence is YDNNYLQFANCC. The chain crosses the membrane as a helical span at residues 68–88; it reads IIKICLVAVSYAWFYHLCNGI. Heme is bound at residue histidine 83. Topologically, residues 89–103 are cytoplasmic; that stretch reads RHLFWDIGYGFSIKA. The chain crosses the membrane as a helical span at residues 104-124; the sequence is VNITGWCVVVCSILLTMLLWV.

It belongs to the cytochrome b560 family. Part of an enzyme complex containing four subunits: a flavoprotein, an iron-sulfur protein, plus two membrane-anchoring proteins, SdhC and SdhD. The complex can form homotrimers. The cofactor is heme.

It localises to the cell inner membrane. It participates in carbohydrate metabolism; tricarboxylic acid cycle. Functionally, membrane-anchoring subunit of succinate dehydrogenase (SDH). In Rickettsia felis (strain ATCC VR-1525 / URRWXCal2) (Rickettsia azadi), this protein is Succinate dehydrogenase cytochrome b556 subunit (sdhC).